The primary structure comprises 459 residues: ATP synthase subunit beta (459 aa).

148–155 (GGAGVGKT) is a binding site for ATP.

This sequence belongs to the ATPase alpha/beta chains family. F-type ATPases have 2 components, CF(1) - the catalytic core - and CF(0) - the membrane proton channel. CF(1) has five subunits: alpha(3), beta(3), gamma(1), delta(1), epsilon(1). CF(0) has three main subunits: a(1), b(2) and c(9-12). The alpha and beta chains form an alternating ring which encloses part of the gamma chain. CF(1) is attached to CF(0) by a central stalk formed by the gamma and epsilon chains, while a peripheral stalk is formed by the delta and b chains.

The protein localises to the cell inner membrane. It carries out the reaction ATP + H2O + 4 H(+)(in) = ADP + phosphate + 5 H(+)(out). Its function is as follows. Produces ATP from ADP in the presence of a proton gradient across the membrane. The catalytic sites are hosted primarily by the beta subunits. The sequence is that of ATP synthase subunit beta from Hahella chejuensis (strain KCTC 2396).